We begin with the raw amino-acid sequence, 276 residues long: 2-dehydro-3-deoxyphosphooctonate aldolase (276 aa).

This sequence belongs to the KdsA family.

Its subcellular location is the cytoplasm. It carries out the reaction D-arabinose 5-phosphate + phosphoenolpyruvate + H2O = 3-deoxy-alpha-D-manno-2-octulosonate-8-phosphate + phosphate. The protein operates within carbohydrate biosynthesis; 3-deoxy-D-manno-octulosonate biosynthesis; 3-deoxy-D-manno-octulosonate from D-ribulose 5-phosphate: step 2/3. It functions in the pathway bacterial outer membrane biogenesis; lipopolysaccharide biosynthesis. The chain is 2-dehydro-3-deoxyphosphooctonate aldolase from Xylella fastidiosa (strain M23).